Here is a 408-residue protein sequence, read N- to C-terminus: S-adenosylmethionine synthase (408 aa).

H19 serves as a coordination point for ATP. D21 contributes to the Mg(2+) binding site. E47 contributes to the K(+) binding site. L-methionine contacts are provided by E60 and Q104. A flexible loop region spans residues 104 to 114 (QSPEIASGVDH). Residues 185–187 (DAK), 255–256 (RF), D264, 270–271 (RK), A287, and K291 each bind ATP. D264 provides a ligand contact to L-methionine. K295 lines the L-methionine pocket.

This sequence belongs to the AdoMet synthase family. Homotetramer; dimer of dimers. The cofactor is Mg(2+). Requires K(+) as cofactor.

Its subcellular location is the cytoplasm. It catalyses the reaction L-methionine + ATP + H2O = S-adenosyl-L-methionine + phosphate + diphosphate. The protein operates within amino-acid biosynthesis; S-adenosyl-L-methionine biosynthesis; S-adenosyl-L-methionine from L-methionine: step 1/1. Functionally, catalyzes the formation of S-adenosylmethionine (AdoMet) from methionine and ATP. The overall synthetic reaction is composed of two sequential steps, AdoMet formation and the subsequent tripolyphosphate hydrolysis which occurs prior to release of AdoMet from the enzyme. The polypeptide is S-adenosylmethionine synthase (Deinococcus radiodurans (strain ATCC 13939 / DSM 20539 / JCM 16871 / CCUG 27074 / LMG 4051 / NBRC 15346 / NCIMB 9279 / VKM B-1422 / R1)).